An 862-amino-acid chain; its full sequence is MRMCTPIRGLLMALAVMFGTAMAFAPIPRITWEHREVHLVQFHEPDIYNYSALLLSEDKDTLYIGAREAVFAVNALNISEKQHEVYWKVSEDKKAKCAEKGKSKQTECLNYIRVLQPLSATSLYVCGTNAFQPACDHLNLTSFKFLGKNEDGKGRCPFDPAHSYTSVMVDGELYSGTSYNFLGSEPIISRNSSHSPLRTEYAIPWLNEPSFVFADVIRKSPDSPDGEDDRVYFFFTEVSVEYEFVFRVLIPRIARVCKGDQGGLRTLQKKWTSFLKARLICSRPDSGLVFNVLRDVFVLRSPGLKVPVFYALFTPQLNNVGLSAVCAYNLSTAEEVFSHGKYMQSTTVEQSHTKWVRYNGPVPKPRPGACIDSEARAANYTSSLNLPDKTLQFVKDHPLMDDSVTPIDNRPRLIKKDVNYTQIVVDRTQALDGTVYDVMFVSTDRGALHKAISLEHAVHIIEETQLFQDFEPVQTLLLSSKKGNRFVYAGSNSGVVQAPLAFCGKHGTCEDCVLARDPYCAWSPPTATCVALHQTESPSRGLIQEMSGDASVCPDKSKGSYRQHFFKHGGTAELKCSQKSNLARVFWKFQNGVLKAESPKYGLMGRKNLLIFNLSEGDSGVYQCLSEERVKNKTVFQVVAKHVLEVKVVPKPVVAPTLSVVQTEGSRIATKVLVASTQGSSPPTPAVQATSSGAITLPPKPAPTGTSCEPKIVINTVPQLHSEKTMYLKSSDNRLLMSLFLFFFVLFLCLFFYNCYKGYLPRQCLKFRSALLIGKKKPKSDFCDREQSLKETLVEPGSFSQQNGEHPKPALDTGYETEQDTITSKVPTDREDSQRIDDLSARDKPFDVKCELKFADSDADGD.

An N-terminal signal peptide occupies residues 1 to 21 (MRMCTPIRGLLMALAVMFGTA). The region spanning 22–500 (MAFAPIPRIT…SNSGVVQAPL (479 aa)) is the Sema domain. Residues 22–734 (MAFAPIPRIT…TMYLKSSDNR (713 aa)) lie on the Extracellular side of the membrane. 2 N-linked (GlcNAc...) asparagine glycosylation sites follow: Asn49 and Asn77. 2 disulfides stabilise this stretch: Cys97-Cys108 and Cys126-Cys135. N-linked (GlcNAc...) asparagine glycosylation is found at Asn139 and Asn191. 2 disulfide bridges follow: Cys257-Cys370 and Cys281-Cys326. N-linked (GlcNAc...) asparagine glycosylation is found at Asn329, Asn379, and Asn419. One can recognise a PSI domain in the interval 502–551 (FCGKHGTCEDCVLARDPYCAWSPPTATCVALHQTESPSRGLIQEMSGDAS). Cystine bridges form between Cys503–Cys520, Cys509–Cys553, Cys512–Cys529, and Cys576–Cys624. Residues 554–636 (PDKSKGSYRQ…EERVKNKTVF (83 aa)) form the Ig-like C2-type domain. Residues Asn613 and Asn632 are each glycosylated (N-linked (GlcNAc...) asparagine). Residues 735 to 755 (LLMSLFLFFFVLFLCLFFYNC) form a helical membrane-spanning segment. Residues 756 to 862 (YKGYLPRQCL…KFADSDADGD (107 aa)) are Cytoplasmic-facing. The segment at 794–837 (VEPGSFSQQNGEHPKPALDTGYETEQDTITSKVPTDREDSQRID) is disordered. Basic and acidic residues predominate over residues 827-837 (PTDREDSQRID). Residue Ser833 is modified to Phosphoserine.

It belongs to the semaphorin family. In terms of assembly, homodimer. Interacts with PLXNB2. Interacts with PLXNB1. In terms of tissue distribution, strongly expressed in skeletal muscle, peripheral blood lymphocytes, spleen, and thymus and also expressed at lower levels in testes, brain, kidney, small intestine, prostate, heart, placenta, lung and pancreas, but not in colon and liver.

The protein localises to the cell membrane. Cell surface receptor for PLXNB1 and PLXNB2 that plays an important role in cell-cell signaling. Regulates GABAergic synapse development. Promotes the development of inhibitory synapses in a PLXNB1-dependent manner. Modulates the complexity and arborization of developing neurites in hippocampal neurons by activating PLXNB1 and interaction with PLXNB1 mediates activation of RHOA. Promotes the migration of cerebellar granule cells. Plays a role in the immune system; induces B-cells to aggregate and improves their viability (in vitro). Induces endothelial cell migration through the activation of PTK2B/PYK2, SRC, and the phosphatidylinositol 3-kinase-AKT pathway. The chain is Semaphorin-4D (SEMA4D) from Homo sapiens (Human).